Consider the following 40-residue polypeptide: RNA replication protein (40 aa).

This sequence belongs to the potexviruses/carlaviruses RNA replication protein family.

The catalysed reaction is RNA(n) + a ribonucleoside 5'-triphosphate = RNA(n+1) + diphosphate. The enzyme catalyses ATP + H2O = ADP + phosphate + H(+). In terms of biological role, RNA replication. The central part of this protein possibly functions as an ATP-binding helicase. In Lily symptomless virus (LSV), this protein is RNA replication protein.